The following is a 248-amino-acid chain: Pyridoxine 5'-phosphate synthase (248 aa).

3-amino-2-oxopropyl phosphate is bound at residue Asn-12. 14–15 is a 1-deoxy-D-xylulose 5-phosphate binding site; it reads DH. Position 23 (Arg-23) interacts with 3-amino-2-oxopropyl phosphate. His-48 serves as the catalytic Proton acceptor. Residues Arg-50 and His-55 each contribute to the 1-deoxy-D-xylulose 5-phosphate site. Glu-75 (proton acceptor) is an active-site residue. A 1-deoxy-D-xylulose 5-phosphate-binding site is contributed by Thr-105. The Proton donor role is filled by His-196. Residues Gly-197 and 218–219 contribute to the 3-amino-2-oxopropyl phosphate site; that span reads GH.

The protein belongs to the PNP synthase family. In terms of assembly, homooctamer; tetramer of dimers.

The protein resides in the cytoplasm. It carries out the reaction 3-amino-2-oxopropyl phosphate + 1-deoxy-D-xylulose 5-phosphate = pyridoxine 5'-phosphate + phosphate + 2 H2O + H(+). It functions in the pathway cofactor biosynthesis; pyridoxine 5'-phosphate biosynthesis; pyridoxine 5'-phosphate from D-erythrose 4-phosphate: step 5/5. Catalyzes the complicated ring closure reaction between the two acyclic compounds 1-deoxy-D-xylulose-5-phosphate (DXP) and 3-amino-2-oxopropyl phosphate (1-amino-acetone-3-phosphate or AAP) to form pyridoxine 5'-phosphate (PNP) and inorganic phosphate. This chain is Pyridoxine 5'-phosphate synthase, found in Pseudomonas fluorescens (strain ATCC BAA-477 / NRRL B-23932 / Pf-5).